The sequence spans 289 residues: uncharacterized protein (289 aa).

Positions 268–289 (SDDGYETQWSDGPYSIPSGLSD) are disordered.

This is an uncharacterized protein from Zea mays (Maize).